Reading from the N-terminus, the 454-residue chain is Death-associated protein kinase 3 (454 aa).

The region spanning 13–275 (YEMGEELGSG…IAQSLEHSWI (263 aa)) is the Protein kinase domain. ATP-binding positions include 19 to 27 (LGSGQFAIV) and Lys-42. Position 50 is a phosphoserine; by autocatalysis (Ser-50). Glu-94 and Val-96 together coordinate pyridone 6. Asp-139 acts as the Proton acceptor in catalysis. The segment at 161–204 (DFGIAHKIEAGNEFKNIFGTPEFVAPEIVNYEPLGLEADMWSIG) is activation segment. Phosphothreonine occurs at positions 180 and 225. Thr-265 carries the phosphothreonine; by autocatalysis and ROCK1 modification. Phosphothreonine; by autocatalysis, DAPK1 and ROCK1 is present on Thr-299. Position 306 is a phosphothreonine; by autocatalysis (Thr-306). Residue Ser-309 is modified to Phosphoserine; by DAPK1. The residue at position 311 (Ser-311) is a Phosphoserine; by autocatalysis and DAPK1. Residues Ser-312, Ser-318, and Ser-326 each carry the phosphoserine; by DAPK1 modification. Residues 427-441 (VASEMRFVQDLVRAL) form a leucine-zipper region.

It belongs to the protein kinase superfamily. CAMK Ser/Thr protein kinase family. DAP kinase subfamily. As to quaternary structure, homooligomer in its kinase-active form (homotrimers and homodimers are reported); monomeric in its kinase-inactive form. Homodimerization is required for activation segment autophosphorylation. Isoform 1 and isoform 2 interact with myosin and PPP1R12A; interaction of isoform 1 with PPP1R12A is inhibited by RhoA dominant negative form. Interacts with NLK, DAXX, STAT3, RHOD (GTP-bound form) and TCP10L. Interacts with PAWR; the interaction is reported conflictingly: according to PubMed:17953487 does not interact with PAWR. Interacts with ULK1; may be a substrate of ULK1. Interacts with LUZP1; the interaction is likely to occur throughout the cell cycle and reduces the LUZP1-mediated suppression of MYL9 phosphorylation. The cofactor is Mg(2+). In terms of processing, the phosphorylation status is critical for kinase activity, oligomerization and intracellular localization. Phosphorylation at Thr-180, Thr-225 and Thr-265 is essential for activity. The phosphorylated form is localized in the cytoplasm promoted by phosphorylation at Thr-299; nuclear translocation or retention is maximal when it is not phosphorylated. Phosphorylation increases the trimeric form, and its dephosphorylation favors a kinase-inactive monomeric form. Both isoform 1 and isoform 2 can undergo autophosphorylation. In terms of tissue distribution, widely expressed. Isoform 1 and isoform 2 are expressed in the bladder smooth muscle.

The protein localises to the nucleus. It localises to the PML body. The protein resides in the cytoplasm. Its subcellular location is the cytoskeleton. It is found in the microtubule organizing center. The protein localises to the centrosome. It localises to the chromosome. The protein resides in the centromere. Its subcellular location is the spindle. It is found in the midbody. It carries out the reaction L-seryl-[protein] + ATP = O-phospho-L-seryl-[protein] + ADP + H(+). It catalyses the reaction L-threonyl-[protein] + ATP = O-phospho-L-threonyl-[protein] + ADP + H(+). A sequential activation is proposed: autophosphorylation at consensus sites is leading to dimerization of the catalytic domain stabilized by phosphorylation at Ser-50 and activation segment exchange (producing an active confirmation of both kinase modules in trans) followed by phosphorylation at Thr-180 in the activation segment and at other regulatory sites. Phosphorylation at Thr-180, Thr-225 and Thr-265 is essential for activity. Oligomerization is required for full enzymatic activity. Inhibited by pyridone-6 (K00225), a potent, ATP-competitive inhibitor. Functionally, serine/threonine kinase which is involved in the regulation of apoptosis, autophagy, transcription, translation and actin cytoskeleton reorganization. Involved in the regulation of smooth muscle contraction. Regulates both type I (caspase-dependent) apoptotic and type II (caspase-independent) autophagic cell deaths signal, depending on the cellular setting. Involved in regulation of starvation-induced autophagy. Regulates myosin phosphorylation in both smooth muscle and non-muscle cells. In smooth muscle, regulates myosin either directly by phosphorylating MYL12B and MYL9 or through inhibition of smooth muscle myosin phosphatase (SMPP1M) via phosphorylation of PPP1R12A; the inhibition of SMPP1M functions to enhance muscle responsiveness to Ca(2+) and promote a contractile state. Phosphorylates MYL12B in non-muscle cells leading to reorganization of actin cytoskeleton. Isoform 2 can phosphorylate myosin, PPP1R12A and MYL12B. Overexpression leads to condensation of actin stress fibers into thick bundles. Involved in actin filament focal adhesion dynamics. The function in both reorganization of actin cytoskeleton and focal adhesion dissolution is modulated by RhoD. Positively regulates canonical Wnt/beta-catenin signaling through interaction with NLK and TCF7L2. Phosphorylates RPL13A on 'Ser-77' upon interferon-gamma activation which is causing RPL13A release from the ribosome, RPL13A association with the GAIT complex and its subsequent involvement in transcript-selective translation inhibition. Enhances transcription from AR-responsive promoters in a hormone- and kinase-dependent manner. Involved in regulation of cell cycle progression and cell proliferation. May be a tumor suppressor. This chain is Death-associated protein kinase 3 (DAPK3), found in Homo sapiens (Human).